Consider the following 213-residue polypeptide: N-(5'-phosphoribosyl)anthranilate isomerase (213 aa).

It belongs to the TrpF family.

The catalysed reaction is N-(5-phospho-beta-D-ribosyl)anthranilate = 1-(2-carboxyphenylamino)-1-deoxy-D-ribulose 5-phosphate. Its pathway is amino-acid biosynthesis; L-tryptophan biosynthesis; L-tryptophan from chorismate: step 3/5. The polypeptide is N-(5'-phosphoribosyl)anthranilate isomerase (Methanocella arvoryzae (strain DSM 22066 / NBRC 105507 / MRE50)).